The following is a 398-amino-acid chain: Trans-2-enoyl-CoA reductase [NADH] (398 aa).

Residues 47-52, 74-75, 111-112, and 139-140 contribute to the NAD(+) site; these read GASSGF, YE, DA, and LA. A substrate-binding site is contributed by Y225. Y235 functions as the Proton donor in the catalytic mechanism. NAD(+)-binding positions include K244 and 274-276; that span reads LVT.

Belongs to the TER reductase family. As to quaternary structure, monomer.

The enzyme catalyses a 2,3-saturated acyl-CoA + NAD(+) = a (2E)-enoyl-CoA + NADH + H(+). It functions in the pathway lipid metabolism; fatty acid biosynthesis. Involved in the fatty acid synthesis (FAS II). Catalyzes the reduction of the carbon-carbon double bond of crotonyl-CoA to yield butyryl-CoA. The protein is Trans-2-enoyl-CoA reductase [NADH] of Clostridium acetobutylicum (strain ATCC 824 / DSM 792 / JCM 1419 / IAM 19013 / LMG 5710 / NBRC 13948 / NRRL B-527 / VKM B-1787 / 2291 / W).